Reading from the N-terminus, the 620-residue chain is Probable translation initiation factor IF-2 (620 aa).

A compositionally biased stretch (acidic residues) spans 1–10; it reads MSDTDADADT. The segment at 1–29 is disordered; it reads MSDTDADADTDAVSTTETSMNADANANAD. Residues 11 to 29 show a composition bias toward low complexity; that stretch reads DAVSTTETSMNADANANAD. Positions 33–248 constitute a tr-type G domain; it reads LRTPIVAVLG…VLMGLSQRYM (216 aa). Residues 42–49 are G1; that stretch reads GHVDHGKT. 42-49 provides a ligand contact to GTP; the sequence is GHVDHGKT. A G2 region spans residues 67–71; the sequence is AITQH. A G3 region spans residues 104-107; sequence DTPG. Residues 104 to 108 and 158 to 161 contribute to the GTP site; these read DTPGH and NKVD. A G4 region spans residues 158–161; it reads NKVD. Residues 162–183 are compositionally biased toward polar residues; that stretch reads TTPGWTPTDGSPIQPTYESQPS. Residues 162-185 form a disordered region; that stretch reads TTPGWTPTDGSPIQPTYESQPSAA. Residues 226–228 form a G5 region; it reads SAI.

The protein belongs to the TRAFAC class translation factor GTPase superfamily. Classic translation factor GTPase family. IF-2 subfamily.

Its function is as follows. Function in general translation initiation by promoting the binding of the formylmethionine-tRNA to ribosomes. Seems to function along with eIF-2. The polypeptide is Probable translation initiation factor IF-2 (Haloquadratum walsbyi (strain DSM 16790 / HBSQ001)).